We begin with the raw amino-acid sequence, 566 residues long: Serine/threonine-protein kinase PknE (566 aa).

The Cytoplasmic portion of the chain corresponds to 1–337; sequence MDGTAESREG…PLPRSARQPW (337 aa). Ser7 carries the phosphoserine; by autocatalysis modification. Phosphothreonine; by autocatalysis is present on Thr11. The 260-residue stretch at 16–275 folds into the Protein kinase domain; sequence YRLRRLVGRG…DLSAAAHAAL (260 aa). Residues 22–30 and Lys45 each bind ATP; that span reads VGRGGMGDV. 2 positions are modified to phosphothreonine; by autocatalysis: Thr50 and Thr59. Catalysis depends on Asp139, which acts as the Proton acceptor. A phosphothreonine; by autocatalysis mark is found at Thr170, Thr175, and Thr178. The segment at 296–330 is disordered; the sequence is PVPSTHPVSPGTRWPQPTPWAGGAPPWGPPSSPLP. A helical transmembrane segment spans residues 338-358; the sequence is LWVGVAVAVVVALAGGLGIAL. Over 359-566 the chain is Extracellular; the sequence is AHPWRSSGPR…DPSWLARLIG (208 aa).

The protein belongs to the protein kinase superfamily. Ser/Thr protein kinase family. In terms of assembly, homodimer. Autophosphorylated on serine and threonine residues. Dephosphorylated by PstP.

The protein localises to the cell membrane. The enzyme catalyses L-seryl-[protein] + ATP = O-phospho-L-seryl-[protein] + ADP + H(+). It carries out the reaction L-threonyl-[protein] + ATP = O-phospho-L-threonyl-[protein] + ADP + H(+). A serine/threonine-protein kinase, acts on HupB in vitro, modifying at least 2 Ser and 8 Thr residues. Important for bacterial survival in the host during infection. The protein is Serine/threonine-protein kinase PknE of Mycobacterium tuberculosis (strain ATCC 25177 / H37Ra).